We begin with the raw amino-acid sequence, 121 residues long: Probable intron-encoded DNA endonuclease aI1 (121 aa).

The protein belongs to the LAGLIDADG endonuclease family.

It is found in the mitochondrion. In terms of biological role, mitochondrial DNA endonuclease involved in intron homing. This Mycosarcoma maydis (Corn smut fungus) protein is Probable intron-encoded DNA endonuclease aI1 (aI1).